Here is an 86-residue protein sequence, read N- to C-terminus: Translation initiation factor IF-1 2 (86 aa).

One can recognise an S1-like domain in the interval 1–72; that stretch reads MAKEELLEME…SKGRITFRHI (72 aa).

The protein belongs to the IF-1 family. Component of the 30S ribosomal translation pre-initiation complex which assembles on the 30S ribosome in the order IF-2 and IF-3, IF-1 and N-formylmethionyl-tRNA(fMet); mRNA recruitment can occur at any time during PIC assembly.

The protein resides in the cytoplasm. In terms of biological role, one of the essential components for the initiation of protein synthesis. Stabilizes the binding of IF-2 and IF-3 on the 30S subunit to which N-formylmethionyl-tRNA(fMet) subsequently binds. Helps modulate mRNA selection, yielding the 30S pre-initiation complex (PIC). Upon addition of the 50S ribosomal subunit IF-1, IF-2 and IF-3 are released leaving the mature 70S translation initiation complex. The protein is Translation initiation factor IF-1 2 of Polynucleobacter asymbioticus (strain DSM 18221 / CIP 109841 / QLW-P1DMWA-1) (Polynucleobacter necessarius subsp. asymbioticus).